Consider the following 600-residue polypeptide: ATP-dependent RNA helicase DDX55 (600 aa).

Residues 9–37 (WESLQVPLHPRVLGALRELGFPHMTPVQS) carry the Q motif motif. The region spanning 40–223 (IPLFMKNKDV…RAGLRNPVRI (184 aa)) is the Helicase ATP-binding domain. 53–60 (AVTGSGKT) contacts ATP. A DEAD box motif is present at residues 171 to 174 (DEAD). A Helicase C-terminal domain is found at 254 to 402 (KFNQLVHFLR…EMSLQRNTID (149 aa)). A compositionally biased stretch (basic and acidic residues) spans 499-513 (LEQKRKERSENEGRK). The disordered stretch occupies residues 499-551 (LEQKRKERSENEGRKKFIKNKAWSKQKAKKERKKKMNAKRKKDEGSDIDDEDM). Positions 514–538 (KFIKNKAWSKQKAKKERKKKMNAKR) are enriched in basic residues. Residues 533–562 (KMNAKRKKDEGSDIDDEDMEELLNDTRLLK) are important for nuclear localization. Phosphoserine is present on residues Ser544 and Ser594.

The protein belongs to the DEAD box helicase family. DDX55/SPB4 subfamily. As to quaternary structure, interacts with 28S rRNA. Interacts with double-stranded RNA substrates in vitro; the interaction stimulates ATPase activity.

The protein resides in the nucleus. Its subcellular location is the nucleoplasm. It catalyses the reaction ATP + H2O = ADP + phosphate + H(+). Its function is as follows. Probable ATP-binding RNA helicase. Has ATPase activity and is involved in the maturation of precursor large subunit rRNAs. This is ATP-dependent RNA helicase DDX55 (Ddx55) from Mus musculus (Mouse).